The sequence spans 66 residues: MGKVHGGLNRAGKVRNATPKKDKEEKRKPKVGRAKKRMIFNRRNVAAVAGFGKKKGYNTQNVPTVA.

The segment at 1-35 is disordered; sequence MGKVHGGLNRAGKVRNATPKKDKEEKRKPKVGRAK.

The protein belongs to the eukaryotic ribosomal protein eS30 family.

The chain is Small ribosomal subunit protein eS30 (rps30-1) from Dictyostelium discoideum (Social amoeba).